A 443-amino-acid polypeptide reads, in one-letter code: Diels-Alderase poxQ (443 aa).

Positions 1–23 (MARIPLEFLSITLPVLLLAYCLA) are cleaved as a signal peptide. N-linked (GlcNAc...) asparagine glycosylation is found at asparagine 78, asparagine 97, and asparagine 145.

This sequence belongs to the Diels-Alderase family.

It participates in secondary metabolite biosynthesis. In terms of biological role, diels-Alderase; part of the gene cluster that mediates the biosynthesis of oxaleimides, cytotoxic compounds containing an unusual disubstituted succinimide moiety. The first step of the pathway is provided by the HR-PKS poxF that serves in a new mode of collaborative biosynthesis with the PKS-NRPS poxE, by providing the olefin containing amino acid substrate via the synthesis of an ACP-bound dec-4-enoate. The cytochrome P450 monooxygenase poxM-catalyzed oxidation at the alpha-position creates the enzyme-bound 2-hydroxydec-4-enoyl-ACP thioester, which may be prone to spontaneous hydrolysis to yield 2-hydroxydec-4-enoic acid due to increased electrophilicity of the carbonyl. 2-hydroxydec-4-enoic acid can then be further oxidized by poxM to yield the alpha-ketoacid 2-oxodec-4-enoicacid, which is reductively aminated by the aminotransferase poxL to yield (S,E)-2-aminodec-4-enoic acid. The Hybrid PKS-NRPS synthetase poxE then performs condensation between the octaketide product of its PKS modules and the amino group of (S,E)-2-aminodec-4-enoic acid which is activated and incorporated by the adenylation domain. The resulting aminoacyl product can be cyclized by the Diels-Alderase PoxQ and reductively released by the reductive (R) domain of poxE to yield an aldehyde intermediate. The released aldehyde is then substrate for a Knoevenagel condensation by the hydrolyase poxO followed by an oxidation at the 5-position of the pyrrolidone ring. The presence of the olefin from the amino acid building block allows for migration of the substituted allyl group to occur. This allylic transposition reaction takes place in a conjugate addition, semipinacol-like fashion to yield a succinimide intermediate. Iterative two-electron oxidations of the C7 methyl of the succinimide intermediate to the carboxylic acid can be catalyzed by one of two remaining cytochrome P450 monooxygenasess poxC or poxD to yield oxaleimide A. Subsequent oxidation yields the maleimide scaffold oxaleimide I. Both oxaleimide A and oxaleimide I can undergo oxidative modifications in the decalin ring to yield the series of products oxaleimides B to H. The protein is Diels-Alderase poxQ of Penicillium oxalicum.